A 35-amino-acid chain; its full sequence is Kappa-stichotoxin-She3a (35 aa).

Residues 3–35 enclose the ShKT domain; sequence CIDTIPKSRCTAFQCKHSMKYRLSFCRKTCGTC. 3 disulfide bridges follow: C3/C35, C12/C28, and C17/C32.

The protein belongs to the sea anemone type 1 potassium channel toxin family. Type 1a subfamily.

It localises to the secreted. Its subcellular location is the nematocyst. Its function is as follows. Peptide with both antimicrobial and neurotoxin activities. Inhibits voltage-dependent potassium channels. Potently blocks Kv1.1/KCNA1 (IC(50)=6.7-87 pM) and Kv1.3/KCNA3 (IC(50)=10-250 pM). Less potently blocks Kv1.4/KCNA4 (IC(50)=0.31 nM), and Kv1.6/KCNA6 (IC(50)=0.16 nM). Shows moderate activity on Kv1.2/KCNA2 (IC(50)=9 nM), Kv1.7/KCNA7 (IC(50)=11.5 nM), and KCa3.1/KCNN4 (Kd=0.03-30 nM). Blocks Kv channels by binding to a shallow vestibule at the outer entrance to the ion conduction pathway and occluding the entrance to the pore. Shows antibacterial activity against all tested bacteria (the Gram-positive bacteria B.subtilis and S.aureus, and the Gram-negative bacteria S.typhimurium and P.aeruginosa). The polypeptide is Kappa-stichotoxin-She3a (Stichodactyla helianthus (Sun anemone)).